Consider the following 322-residue polypeptide: UV DNA damage endonuclease (322 aa).

This sequence belongs to the uve1/UvsE family.

In terms of biological role, component in a DNA repair pathway. Removal of UV LIGHT damaged nucleotides. Recognizes pyrimidine dimers and cleave a phosphodiester bond immediately 5' to the lesion. The sequence is that of UV DNA damage endonuclease from Nostoc sp. (strain PCC 7120 / SAG 25.82 / UTEX 2576).